A 172-amino-acid polypeptide reads, in one-letter code: MKKEAKSQVVSEMAQKLASCQAAFLADYRGLTVEQVNQLRGELKKVGVEYRVVKNTLLRLASKGTDAECLSEYLQGPNAIALAEEDPVGPAKVLTQFAKSNKAFELRAAELNGKLLSIDEVKALAELPSKEELLGKMLGSINAPVSNFVGVLAAVPRTFVQVLAAIQQQKEG.

Belongs to the universal ribosomal protein uL10 family. As to quaternary structure, part of the ribosomal stalk of the 50S ribosomal subunit. The N-terminus interacts with L11 and the large rRNA to form the base of the stalk. The C-terminus forms an elongated spine to which L12 dimers bind in a sequential fashion forming a multimeric L10(L12)X complex.

Functionally, forms part of the ribosomal stalk, playing a central role in the interaction of the ribosome with GTP-bound translation factors. This is Large ribosomal subunit protein uL10 from Syntrophotalea carbinolica (strain DSM 2380 / NBRC 103641 / GraBd1) (Pelobacter carbinolicus).